The chain runs to 760 residues: Colleterpenol synthase (760 aa).

The tract at residues 14–335 (ASSGLRSKFR…YTRRYPSKAD (322 aa)) is terpene cyclase. Mg(2+) is bound at residue D95. The short motif at 95–99 (DDYYD) is the DDXXD 1 element. Residues 233–241 (NDLYSWPKE) carry the NSE/DTE motif. A prenyltransferase region spans residues 336-759 (LRQPEVEFVD…LELVLRRLWI (424 aa)). Residues 359 to 400 (EEKVVSESVESLPTTEVEDEFSSSDASPGSVDQAISTPPSTT) form a disordered region. The segment covering 391–400 (QAISTPPSTT) has biased composition (polar residues). Residues K477, R480, and H509 each coordinate isopentenyl diphosphate. Residues D516 and D520 each coordinate Mg(2+). Positions 516–520 (DDIED) match the DDXXD 2 motif. R525 contacts dimethylallyl diphosphate. Residue R526 participates in isopentenyl diphosphate binding. Dimethylallyl diphosphate-binding residues include K605, T606, Q643, N650, K660, and K670.

It in the N-terminal section; belongs to the terpene synthase family. This sequence in the C-terminal section; belongs to the FPP/GGPP synthase family. As to quaternary structure, hexamer. Mg(2+) serves as cofactor.

The catalysed reaction is 5 isopentenyl diphosphate + dimethylallyl diphosphate = all-trans-hexaprenyl diphosphate + 5 diphosphate. It catalyses the reaction all-trans-hexaprenyl diphosphate + H2O = colleterpenol + diphosphate. Its function is as follows. Bifunctional terpene synthase that converts dimethylallyl diphosphate (DMAPP) and isopentenyl diphosphate (IPP) into colleterpenol as a single product. The C-terminal prenyltransferase (PT) domain of CgCS catalyzes formation of hexaprenyl diphosphate (HexPP), whereas the N-terminal terpene cyclase (TC) domain catalyzes the cyclization of HexPP to colleterpenol. The protein is Colleterpenol synthase of Colletotrichum gloeosporioides (Anthracnose fungus).